The following is an 870-amino-acid chain: Ubiquitin-protein ligase E3A (870 aa).

Residue Ser8 is modified to Phosphoserine. The segment at 42–81 adopts a C4-type; atypical zinc-finger fold; sequence CGNEACTNEFCASCPTFLRMDNNAAAIKALELYKINAKLC. Basic and acidic residues predominate over residues 171–180; the sequence is EELKSLQEKD. Positions 171–223 are disordered; sequence EELKSLQEKDEDKDEDEKEKAACSAAAMEEDSEASSSRMGDSSQGDNNVQKLG. A compositionally biased stretch (polar residues) spans 208 to 220; that stretch reads RMGDSSQGDNNVQ. Position 213 is a phosphoserine (Ser213). The region spanning 542–870 is the HECT domain; it reads NPADLKKQLY…ITYAKGFGML (329 aa). Tyr654 carries the phosphotyrosine; by ABL1 modification. Catalysis depends on Cys838, which acts as the Glycyl thioester intermediate.

The active form is probably a homotrimer. Binds UBQLN1 and UBQLN2. Interacts with the 26S proteasome. Interacts with BPY2. Interacts with HIF1AN, MAPK6 and NEURL4; interaction with MAPK6 may be mediated by NEURL4. Interacts with the proteasomal subunit PSMD4. Interacts with BMAL1. Interacts with ARC. Interacts with ESR1 and WBP2. Post-translationally, phosphorylation at Tyr-654 by ABL1 impairs E3 ligase activity. Widely expressed. Most abundant in brain, heart and thymus.

The protein localises to the cytoplasm. The protein resides in the nucleus. The catalysed reaction is S-ubiquitinyl-[E2 ubiquitin-conjugating enzyme]-L-cysteine + [acceptor protein]-L-lysine = [E2 ubiquitin-conjugating enzyme]-L-cysteine + N(6)-ubiquitinyl-[acceptor protein]-L-lysine.. It participates in protein modification; protein ubiquitination. E3 ubiquitin-protein ligase which accepts ubiquitin from an E2 ubiquitin-conjugating enzyme in the form of a thioester and transfers it to its substrates. Several substrates have been identified including the BMAL1, ARC, LAMTOR1, RAD23A and RAD23B, MCM7 (which is involved in DNA replication), annexin A1, the PML tumor suppressor, and the cell cycle regulator CDKN1B. Additionally, may function as a cellular quality control ubiquitin ligase by helping the degradation of the cytoplasmic misfolded proteins. Finally, UBE3A also promotes its own degradation in vivo. Plays an important role in the regulation of the circadian clock: involved in the ubiquitination of the core clock component BMAL1, leading to its proteasomal degradation. Acts as a regulator of synaptic development by mediating ubiquitination and degradation of ARC. Required for synaptic remodeling in neurons by mediating ubiquitination and degradation of LAMTOR1, thereby limiting mTORC1 signaling and activity-dependent synaptic remodeling. Synergizes with WBP2 in enhancing PGR activity. The chain is Ubiquitin-protein ligase E3A from Mus musculus (Mouse).